Here is a 692-residue protein sequence, read N- to C-terminus: Threonine--tRNA ligase (692 aa).

The TGS domain maps to 2–59 (AEAHISITVNGEAKEVEASQTGVELFADDKNIIAVRLNGELRDLYTPLHDGDNVESVT). The segment at 255–561 (DHRKLGQEMD…LLEHYAGAFP (307 aa)) is catalytic. Zn(2+) contacts are provided by cysteine 360, histidine 411, and histidine 538.

The protein belongs to the class-II aminoacyl-tRNA synthetase family. Homodimer. Zn(2+) is required as a cofactor.

It is found in the cytoplasm. It catalyses the reaction tRNA(Thr) + L-threonine + ATP = L-threonyl-tRNA(Thr) + AMP + diphosphate + H(+). In terms of biological role, catalyzes the attachment of threonine to tRNA(Thr) in a two-step reaction: L-threonine is first activated by ATP to form Thr-AMP and then transferred to the acceptor end of tRNA(Thr). Also edits incorrectly charged L-seryl-tRNA(Thr). This is Threonine--tRNA ligase from Bifidobacterium animalis subsp. lactis (strain AD011).